Consider the following 440-residue polypeptide: Aclacinomycin-T 2-deoxy-L-fucose transferase (440 aa).

It catalyses the reaction dTDP-2-deoxy-beta-L-fucose + aclacinomycin T = aclacinomycin S + dTDP + H(+). In terms of biological role, involved in the biosynthesis of the trisaccharide moiety characteristic of the antitumor drug aclacinomycins. In the first reaction, AknK catalyzes the transfer of 2-deoxy-beta-L-fucose from the activated donor dTDP-2-deoxy-beta-L-fucose to the mono-glycosylated aclacinomycin T (rhodosaminyl aklavinone), forming the di-glycosylated aclacinomycin S (L-2-deoxyfucosyl-L-rhodosaminyl aklavinone). It can also catalyze the addition of an alternate dTDP-L-sugar, dTDP-L-daunosamine, to aclacinomycin T and the addition of 2-deoxy-beta-L-fucose to the mono-glycosylated aglycones (monoglycosylated anthracyclines) such as daunomycin (daunorubicin), adriamycin (doxorubicin) and idarubicin. In vitro, AknK also catalyzes the addition of a second L-2-deoxyfucosyl moiety from dTDP-2-deoxy-beta-L-fucose, albeit with reduced activity, to the natural disaccharide chain of aclacinomycin S to produce L-deoxyfucosyl-L-deoxyfucosyl-L-rhodosaminyl aklavinone (2-deoxy-alpha-D-fucosyl-aclacinomycin S), a variant of the natural aclacinomycin A. This is Aclacinomycin-T 2-deoxy-L-fucose transferase from Streptomyces galilaeus.